The sequence spans 530 residues: Autoinducer-2 kinase (530 aa).

The protein belongs to the FGGY kinase family.

It is found in the cytoplasm. It catalyses the reaction (S)-4,5-dihydroxypentane-2,3-dione + ATP = (2S)-2-hydroxy-3,4-dioxopentyl phosphate + ADP + H(+). In terms of biological role, catalyzes the phosphorylation of autoinducer-2 (AI-2) to phospho-AI-2, which subsequently inactivates the transcriptional regulator LsrR and leads to the transcription of the lsr operon. Phosphorylates the ring-open form of (S)-4,5-dihydroxypentane-2,3-dione (DPD), which is the precursor to all AI-2 signaling molecules, at the C5 position. In Escherichia coli (strain K12 / DH10B), this protein is Autoinducer-2 kinase.